A 98-amino-acid polypeptide reads, in one-letter code: MTLFSSISSISNPMTSSKSSISSFGSGTSMGSNSIACGGCGGSGGILGLGLGLGLGLDLTGGSRSRGACGGNGGNRGNGNGGMGGGKSPCCGGCCCGI.

Positions 1–29 are disordered; sequence MTLFSSISSISNPMTSSKSSISSFGSGTS.

The protein belongs to the hssA/B family.

The polypeptide is HssA/B-like protein 36 (hssl36) (Dictyostelium discoideum (Social amoeba)).